A 299-amino-acid chain; its full sequence is S-fimbrial protein subunit SfaH (299 aa).

This sequence belongs to the fimbrial protein family.

The protein resides in the fimbrium. In terms of biological role, fimbriae (also called pili), polar filaments radiating from the surface of the bacterium to a length of 0.5-1.5 micrometers and numbering 100-300 per cell, enable bacteria to colonize the epithelium of specific host organs. Its function is as follows. A minor fimbrial subunit. This protein is necessary for full expression of S-specific binding. S-fimbrial adhesins enable pathogenic E.coli causing urinary-tract infections or newborn meningitis to attach to glycoproteins terminating with alpha-sialic acid-(2-3)-beta-Gal. This Escherichia coli O6:K15:H31 (strain 536 / UPEC) protein is S-fimbrial protein subunit SfaH (sfaH).